We begin with the raw amino-acid sequence, 95 residues long: Selenoprotein K (95 aa).

The helical transmembrane segment at 20 to 42 threads the bilayer; the sequence is LSFLTDMFWGITDFVVMFFQSII. Positions 47-95 are disordered; it reads TRRGCQNSSSSTRYDDGRGPPGHPRRMGRINHGSGPSAPPMAGGGGUGR. Position 93 (Sec-93) is a non-standard amino acid, selenocysteine.

This sequence belongs to the selenoprotein K family.

It is found in the endoplasmic reticulum membrane. The protein localises to the cell membrane. Required for Ca(2+) flux in immune cells and plays a role in T-cell proliferation and in T-cell and neutrophil migration. Involved in endoplasmic reticulum-associated degradation (ERAD) of soluble glycosylated proteins. Required for cell surface expression of CD36 and involved in macrophage uptake of low-density lipoprotein and in foam cell formation. Required for palmitoylation. The chain is Selenoprotein K (selenok) from Xenopus laevis (African clawed frog).